Here is a 1361-residue protein sequence, read N- to C-terminus: MGDDQEDDFPRRLSESMEDLSLDLGALQGSEYLQDLGLGAPSHSQPGETPDSRPTGEEPGRDSLFSSLAGSQDLSRRRSWERSRSCSESWRRLSLDASAVDEEPCLPRTLASLALNLPGGGLKTWTQGCLSGGGTPAESPGKECDSPKKRGRSRSVPVSFYEIRSPEISPGLEVPTPPVQGLEPPVLECMEKDHVEPDHVLIVQQVLQELRQYHGARQRACMSASPGGAHSNLTWFEFLSESEDGAGKNEKSDKSTSVKRRLSCLRSRVTRQKEKGKSPAHLKDKGQDARERRECVNGHQLLQGTFSGPSSCPLCGKPFLSSASLKEHPRGTLLSDGSPALSRNVGMTVSQKGGPQPTPSPAGPGTQLGPITGEMDEADSAFLKFKQTADDSLSLTSPNTESIFVEDPYTASLRSEIESDGHEFEAESWSLAVDAAYAKKQKREVVKRQDVLYELMQTEVHHVRTLKIMLKVYSRALQEELQFSSKAIGRLFPCADDLLETHSHFLARLKERRQESLEEGSDRNYVIQKIGDLLVQQFSGENGERMKEKYGVFCSGHNEAVSHYKLLLQQNKKFQNLIKKIGNFSIVRRLGVQECILLVTQRITKYPVLVERIIQNTEAGTEDYEDLTQALNLIKDIISQVDAKVSECEKGQRLREIAGKMDLKSSSKLKNGLTFRKEDMLQRQLHLEGMLCWKTTSGRLKDILAILLTDVLLLLQEKDQKYVFASVDSKPPVISLQKLIVREVANEEKAMFLISASLQGPEMYEIYTSSKEDRNAWMAHIQRAVESCPDEEEGPFSLPEEERKVVEARATRLRDFQERLSMKDQLIAQSLLEKQQIYLEMAEMGGLEDLPQPRGLFRGGDPSETLQGELILKSAMSEIEGIQSLICRQLGSANGQAEDGGSSTGPPRRAETFAGYDCTNSPTKNGSFKKKVSSTDPRPRDWRGPPNSPDLKLSDSDIPGSSEESPQVVEAPGTESDPRLPTVLESELVQRIQTLSQLLLNLQAVIAHQDSYVETQRAAIQEREKQFRLQSTRGNLLLEQERQRNFEKQREERAALEKLQSQLRHEQQRWERERQWQHQELERAGARLQEREGEARQLRERLEQERAELERQRQAYQHDLERLREAQRAVERERERLELLRRLKKQNTAPGALPPDTLAEAQPPSHPPSFNGEGLEGPRVSMLPSGVGPEYAERPEVARRDSAPTENRLAKSDVPIQLLSATNQFQRQAAVQQQIPTKLAASTKGGKDKGGKSRGSQRWESSASFDLKQQLLLNKLMGKDESTSRNRRSLSPILPGRHSPAPPPDPGFPAPSPPPADSPSEGFSLKAGGTALLPGPPAPSPLPATPLSAKEDASKEDVIFF.

3 disordered regions span residues 33–88 (LQDL…SCSE), 131–156 (SGGG…SRSV), and 244–292 (DGAG…ARER). Residues 50–61 (PDSRPTGEEPGR) show a composition bias toward basic and acidic residues. Over residues 64 to 73 (LFSSLAGSQD) the composition is skewed to polar residues. Residues 74-88 (LSRRRSWERSRSCSE) show a composition bias toward basic and acidic residues. Basic and acidic residues-rich tracts occupy residues 245-256 (GAGKNEKSDKST) and 271-292 (RQKE…ARER). Residues 310–334 (SSCPLCGKPFLSSASLKEHPRGTLL) form a C2H2-type; degenerate zinc finger. The interval 348-368 (TVSQKGGPQPTPSPAGPGTQL) is disordered. The 198-residue stretch at 447-644 (KRQDVLYELM…KDIISQVDAK (198 aa)) folds into the DH domain. One can recognise a PH domain in the interval 684-786 (QLHLEGMLCW…WMAHIQRAVE (103 aa)). Disordered stretches follow at residues 893 to 980 (ANGQ…DPRL), 1143 to 1211 (LKKQ…RLAK), 1229 to 1264 (AAVQ…SSAS), and 1277 to 1361 (MGKD…VIFF). At T912 the chain carries Phosphothreonine. S921 is subject to Phosphoserine. The stretch at 1038-1148 (LEQERQRNFE…LLRRLKKQNT (111 aa)) forms a coiled coil. Over residues 1191 to 1211 (YAERPEVARRDSAPTENRLAK) the composition is skewed to basic and acidic residues. Positions 1254-1264 (RGSQRWESSAS) are enriched in polar residues. Phosphoserine is present on residues S1289 and S1291. 2 stretches are compositionally biased toward pro residues: residues 1300–1317 (PAPP…PPAD) and 1334–1344 (PGPPAPSPLPA). Positions 1349–1361 (AKEDASKEDVIFF) are enriched in basic and acidic residues.

In terms of assembly, interacts with SEPT9; the interaction may inhibit GEF activity. Interacts with Gbetagamma subunits GNB1 and GNG2. Interacts with EPB41L4B. Interacts with PATJ (via C-terminus). In terms of tissue distribution, expressed in all tissues tested with highest expression in kidney and pancreas. Weakly or not expressed in liver, skeletal muscle and testis. Isoform 1: Expressed in eosinophils. Isoform 2: Expressed in eosinophils. Isoform 3: Expressed in eosinophils. Isoform 4: Not detected in eosinophils.

Its subcellular location is the cytoplasm. It is found in the cytoskeleton. The protein localises to the cell membrane. The protein resides in the apical cell membrane. Functionally, acts as a guanine nucleotide exchange factor (GEF) for RhoA GTPases. Its activation induces formation of actin stress fibers. Also acts as a GEF for RAC1, inducing production of reactive oxygen species (ROS). Does not act as a GEF for CDC42. The G protein beta-gamma (Gbetagamma) subunits of heterotrimeric G proteins act as activators, explaining the integrated effects of LPA and other G-protein coupled receptor agonists on actin stress fiber formation, cell shape change and ROS production. Required for EPB41L4B-mediated regulation of the circumferential actomyosin belt in epithelial cells. This chain is Rho guanine nucleotide exchange factor 18 (ARHGEF18), found in Homo sapiens (Human).